We begin with the raw amino-acid sequence, 383 residues long: Paralemmin-1 (383 aa).

Met1 carries the N-acetylmethionine modification. Residues 5–102 (ATDTASQQER…KEIDVLEFGE (98 aa)) are a coiled coil. 3 disordered regions span residues 51–163 (RERW…GSTM), 242–295 (TLSE…GQEP), and 334–375 (ATPR…MKKP). Over residues 69 to 96 (DMRKQMQEDEQKARGLEESITRLEKEID) the composition is skewed to basic and acidic residues. Composition is skewed to polar residues over residues 109 to 124 (KENS…QSAS) and 133 to 143 (ETLVNAQQTPL). 3 positions are modified to phosphoserine: Ser116, Ser122, and Ser124. Phosphothreonine is present on residues Thr141, Thr145, and Thr153. 2 positions are modified to phosphoserine: Ser157 and Ser161. Phosphothreonine is present on Thr242. Ser244 bears the Phosphoserine mark. Residues 257–273 (GLAEDVTRTTPSRREIT) show a composition bias toward basic and acidic residues. A compositionally biased stretch (low complexity) spans 285–295 (GPPGIQPGQEP). At Ser345 the chain carries Phosphoserine. Over residues 357-367 (QTGPTTTPSDT) the composition is skewed to polar residues. A phosphothreonine mark is found at Thr361, Thr362, and Thr363. Ser365 bears the Phosphoserine mark. Thr367 carries the post-translational modification Phosphothreonine. S-palmitoyl cysteine attachment occurs at residues Cys377 and Cys379. Residue Cys380 is modified to Cysteine methyl ester. Residue Cys380 is the site of S-farnesyl cysteine attachment. Positions 381–383 (SVM) are cleaved as a propeptide — removed in mature form.

This sequence belongs to the paralemmin family. In terms of assembly, interacts with dopamine receptor DRD3. Expression is highest in brain, intermediate in adrenal gland and kidney, and much lower or undetectable in other tissues. Isoform 1 is the predominant isoform in most tissues except brain and kidney where isoform 2 predominates.

It localises to the cell membrane. The protein resides in the cell projection. The protein localises to the filopodium membrane. Its subcellular location is the axon. It is found in the dendrite. It localises to the dendritic spine. The protein resides in the basolateral cell membrane. The protein localises to the apicolateral cell membrane. Involved in plasma membrane dynamics and cell process formation. Isoform 1 and isoform 2 are necessary for axonal and dendritic filopodia induction, for dendritic spine maturation and synapse formation in a palmitoylation-dependent manner. The polypeptide is Paralemmin-1 (Palm) (Mus musculus (Mouse)).